The following is a 245-amino-acid chain: Ureidoacrylate amidohydrolase RutB (245 aa).

Residue aspartate 41 is the Proton acceptor of the active site. Lysine 150 is an active-site residue. Catalysis depends on cysteine 183, which acts as the Nucleophile.

It belongs to the isochorismatase family. RutB subfamily.

The catalysed reaction is (Z)-3-ureidoacrylate + H2O + H(+) = (Z)-3-aminoacrylate + NH4(+) + CO2. It carries out the reaction (Z)-3-ureidoacrylate + H2O = (Z)-3-aminoacrylate + carbamate + H(+). The enzyme catalyses (Z)-2-methylureidoacrylate + H2O + H(+) = (Z)-2-methylaminoacrylate + NH4(+) + CO2. In terms of biological role, hydrolyzes ureidoacrylate to form aminoacrylate and carbamate. The carbamate hydrolyzes spontaneously, thereby releasing one of the nitrogen atoms of the pyrimidine ring as ammonia and one of its carbon atoms as CO2. The sequence is that of Ureidoacrylate amidohydrolase RutB from Pseudomonas savastanoi pv. phaseolicola (strain 1448A / Race 6) (Pseudomonas syringae pv. phaseolicola (strain 1448A / Race 6)).